The following is a 285-amino-acid chain: Ribosomal RNA small subunit methyltransferase I (285 aa).

The protein belongs to the methyltransferase superfamily. RsmI family.

The protein localises to the cytoplasm. The enzyme catalyses cytidine(1402) in 16S rRNA + S-adenosyl-L-methionine = 2'-O-methylcytidine(1402) in 16S rRNA + S-adenosyl-L-homocysteine + H(+). In terms of biological role, catalyzes the 2'-O-methylation of the ribose of cytidine 1402 (C1402) in 16S rRNA. This chain is Ribosomal RNA small subunit methyltransferase I, found in Mycobacterium tuberculosis (strain ATCC 25618 / H37Rv).